A 1670-amino-acid chain; its full sequence is Collagen alpha-3(IV) chain (1670 aa).

The first 28 residues, 1 to 28 (MSARTAPRPQVLLLPLLLVLLAAAPAAS), serve as a signal peptide directing secretion. The 7S domain stretch occupies residues 29-42 (KGCVCKDKGQCFCD). The interval 43-1438 (GAKGEKGEKG…KGKRGDSGSP (1396 aa)) is triple-helical region. Disordered stretches follow at residues 49 to 78 (GEKGFPGPPGSPGQKGFTGPEGLPGPQGPK), 167 to 469 (LDAK…DGPK), and 502 to 1442 (GRQG…ATWT). The span at 176–200 (PGAPGPQGLPGPPGFPGPVGPPGPP) shows a compositional bias: pro residues. The span at 202 to 212 (FFGFPGAMGPR) shows a compositional bias: low complexity. Residues 217-231 (HMGERVIGHKGERGV) are compositionally biased toward basic and acidic residues. Over residues 242 to 251 (GTVIVTLTGP) the composition is skewed to low complexity. N-linked (GlcNAc...) asparagine glycosylation is present at Asn253. The segment covering 253–266 (NRTDLKGEKGDKGA) has biased composition (basic and acidic residues). Positions 382–394 (SPGSSRPGLRGAP) are enriched in low complexity. Over residues 402–411 (SKGERGRPGK) the composition is skewed to basic and acidic residues. Low complexity predominate over residues 415 to 428 (GTPGSPGCAGSPGL). Pro residues-rich tracts occupy residues 429–438 (PGSPGPPGPP), 598–618 (PGDPGSPGSPGPAGPAGPPGY), and 654–675 (VPGPPGPPGPPGHPGPQGPPGI). Positions 791-793 (RGD) match the Cell attachment site motif. Residues 900–909 (IGPPGPPGNP) are compositionally biased toward pro residues. Low complexity predominate over residues 974–987 (VPGMPGLKGLKGLP). The Cell attachment site motif lies at 996-998 (RGD). Low complexity-rich tracts occupy residues 1013–1025 (IPGSMGNMGMPGS), 1094–1105 (LGPAGPEGAPGS), and 1118–1133 (HGDLGFKGIKGLLGPP). Positions 1135 to 1148 (IRGPPGLPGFPGSP) are enriched in pro residues. The Cell attachment site signature appears at 1154 to 1156 (RGD). Low complexity-rich tracts occupy residues 1230–1250 (PGAIIPGQTGNRGPPGSRGSP) and 1290–1299 (PPGRLGAPGT). The short motif at 1306-1308 (RGD) is the Cell attachment site element. A compositionally biased stretch (pro residues) spans 1332–1341 (PPGPIGPKGP). Short sequence motifs (cell attachment site) lie at residues 1345–1347 (RGD) and 1432–1434 (RGD). Residues 1427–1444 (GLKGKRGDSGSPATWTTR) are epitope recognized by Goodpasture antibodies. Residues 1445–1669 (GFVFTRHSQT…SRCQVCMKKR (225 aa)) form the Collagen IV NC1 domain. Disulfide bonds link Cys1460–Cys1551, Cys1493–Cys1548, Cys1505–Cys1511, Cys1570–Cys1665, Cys1604–Cys1662, and Cys1616–Cys1622. Residues 1479–1557 (NQRAHGQDLG…CTVCEGPAIA (79 aa)) form a required for the anti-angiogenic activity of tumstatin region. Met1533 participates in a covalent cross-link: S-Lysyl-methionine sulfilimine (Met-Lys) (interchain with K-1651). The segment at 1610-1628 (ASPFLECHGRGTCNYYSNS) is required for the anti-tumor cell activity of tumstatin. Residue Lys1651 forms an S-Lysyl-methionine sulfilimine (Lys-Met) (interchain with M-1533) linkage.

Belongs to the type IV collagen family. As to quaternary structure, there are six type IV collagen isoforms, alpha 1(IV)-alpha 6(IV), each of which can form a triple helix structure with 2 other chains to generate type IV collagen network. The alpha 3(IV) chain forms a triple helical protomer with alpha 4(IV) and alpha 5(IV); this triple helical structure dimerizes through NC1-NC1 domain interactions such that the alpha 3(IV), alpha 4(IV) and alpha 5(IV) chains of one protomer connect with the alpha 5(IV), alpha 4(IV) and alpha 3(IV) chains of the opposite promoter, respectively. Interacts with ITGB3. Associates with LAMB2 at the neuromuscular junction and in GBM. In terms of processing, prolines at the third position of the tripeptide repeating unit (G-X-Y) are hydroxylated in some or all of the chains. Isoform 2 contains an additional N-linked glycosylation site. Post-translationally, type IV collagens contain numerous cysteine residues which are involved in inter- and intramolecular disulfide bonding. 12 of these, located in the NC1 domain, are conserved in all known type IV collagens. In terms of processing, the trimeric structure of the NC1 domains is stabilized by covalent bonds between Lys and Met residues. Phosphorylated. Thought to be phosphorylated by CERT, but CERT does not have kinase activity. Alpha 3 and alpha 4 type IV collagens are colocalized and present in kidney, eye, basement membranes of lens capsule, cochlea, lung, skeletal muscle, aorta, synaptic fibers, fetal kidney and fetal lung. PubMed:8083201 reports similar levels of expression of alpha 3 and alpha 4 type IV collagens in kidney, but PubMed:7523402 reports that in kidney levels of alpha 3 type IV collagen are significantly lower than those of alpha 4 type IV collagen. According to PubMed:8083201, alpha 3 type IV collagen is not detected in heart, brain, placenta, liver, pancreas, extrasynaptic muscle fibers, endoneurial and perineurial nerves, fetal brain, fetal heart and fetal liver. According to PubMed:7523402, alpha 3 type IV collagen is strongly expressed in pancreas, neuroretina and calvaria and not expressed in adrenal, ileum and skin. Isoform 1 and isoform 3 are strongly expressed in kidney, lung, suprarenal capsule, muscle and spleen, in each of these tissues isoform 1 is more abundant than isoform 3. Isoform 1 and isoform 3 are expressed at low levels in artery, fat, pericardium and peripherical nerve, but not in placenta, mesangium, skin, pleura and cultured umbilical endothelial cells.

Its subcellular location is the secreted. It localises to the extracellular space. The protein resides in the extracellular matrix. It is found in the basement membrane. Its function is as follows. Type IV collagen is the major structural component of glomerular basement membranes (GBM), forming a 'chicken-wire' meshwork together with laminins, proteoglycans and entactin/nidogen. Tumstatin, a cleavage fragment corresponding to the collagen alpha 3(IV) NC1 domain, possesses both anti-angiogenic and anti-tumor cell activity; these two anti-tumor properties may be regulated via RGD-independent ITGB3-mediated mechanisms. This is Collagen alpha-3(IV) chain (COL4A3) from Homo sapiens (Human).